Reading from the N-terminus, the 150-residue chain is Globin-1 (150 aa).

In terms of domain architecture, Globin spans Pro-11–Tyr-150. Heme b contacts are provided by His-74 and His-106.

It belongs to the globin family. Monomer.

This chain is Globin-1, found in Mordacia mordax (Southern hemisphere lamprey).